The primary structure comprises 258 residues: Neurotrophin-3 (258 aa).

The signal sequence occupies residues 1-18 (MSILFYVIFLAYLRGIQG). The propeptide occupies 19 to 139 (NSMDQRSLPE…ANRTSPRRKR (121 aa)). Positions 60–85 (QSTLPKAEAPREPEQGEATRSEFQPM) are disordered. Residues 67 to 79 (EAPREPEQGEATR) show a composition bias toward basic and acidic residues. An N-linked (GlcNAc...) asparagine glycan is attached at asparagine 131. 3 cysteine pairs are disulfide-bonded: cysteine 153–cysteine 218, cysteine 196–cysteine 247, and cysteine 206–cysteine 249.

This sequence belongs to the NGF-beta family. Brain and peripheral tissues.

The protein localises to the secreted. Seems to promote the survival of visceral and proprioceptive sensory neurons. In Mus musculus (Mouse), this protein is Neurotrophin-3 (Ntf3).